The chain runs to 276 residues: Pantothenate synthetase (276 aa).

Position 25–32 (25–32 (MGYLHRGH)) interacts with ATP. His-32 acts as the Proton donor in catalysis. Residue Gln-56 participates in (R)-pantoate binding. Gln-56 contributes to the beta-alanine binding site. 143–146 (GEKD) contributes to the ATP binding site. (R)-pantoate is bound at residue Gln-149. ATP is bound by residues Val-172 and 180–183 (LSSR).

Belongs to the pantothenate synthetase family. Homodimer.

It localises to the cytoplasm. The catalysed reaction is (R)-pantoate + beta-alanine + ATP = (R)-pantothenate + AMP + diphosphate + H(+). Its pathway is cofactor biosynthesis; (R)-pantothenate biosynthesis; (R)-pantothenate from (R)-pantoate and beta-alanine: step 1/1. Its function is as follows. Catalyzes the condensation of pantoate with beta-alanine in an ATP-dependent reaction via a pantoyl-adenylate intermediate. In Thermus thermophilus (strain ATCC BAA-163 / DSM 7039 / HB27), this protein is Pantothenate synthetase.